Here is a 479-residue protein sequence, read N- to C-terminus: MAIAWGTVPSLAPVNLKKEGLQVVKEDHLSAREQGVKLQGNGTGFRQEPLCKRFRQLRYEETTGPREALSRLRELCRQWLQPETHTKEQILELLVLEQFLTILPEELQARLREHHLESGEDAVVFLEDLQLELGGTGQQEDPNQAKKQEVLMEETAPGKATPERQVQPEGDVPQPEREKGEAKRIENGKLVVETDSCGRVESSGKPFEPMEVHYKDSNLDRQQAEPKEKTDCKCSEYGQAFFQHSDLIKHESSHRKEKLCEAEVCQSLSLPGHQKICSREKGHQCHECGKAFQRSSHLVRHQKIHLGEKPYQCKECGKVFSQNAGLLEHLRIHTGEKPYLCIHCGKNFRRSSHLNRHQRIHSQEEPCQCKECGKTFSQALLLTHHQRIHSHSRSHQCNECGKTFSLTSDLIRHHRIHTGEKPFKCTICQKAFRLNSHLAQHVRIHNEEKPYKCNECGEAFRQRSGLFQHQRYHHKNRLA.

Lysine 17 participates in a covalent cross-link: Glycyl lysine isopeptide (Lys-Gly) (interchain with G-Cter in SUMO2). Positions 51-133 (CKRFRQLRYE…VFLEDLQLEL (83 aa)) constitute an SCAN box domain. The interval 155 to 187 (TAPGKATPERQVQPEGDVPQPEREKGEAKRIEN) is disordered. A compositionally biased stretch (basic and acidic residues) spans 174 to 187 (QPEREKGEAKRIEN). Residues 232–254 (CKCSEYGQAFFQHSDLIKHESSH) form a C2H2-type 1; degenerate zinc finger. 7 consecutive C2H2-type zinc fingers follow at residues 283–305 (HQCH…QKIH), 311–333 (YQCK…LRIH), 339–361 (YLCI…QRIH), 367–389 (CQCK…QRIH), 395–417 (HQCN…HRIH), 423–445 (FKCT…VRIH), and 451–473 (YKCN…QRYH).

The protein resides in the nucleus. In terms of biological role, may be involved in transcriptional regulation. The sequence is that of Zinc finger and SCAN domain-containing protein 26 (ZSCAN26) from Bos taurus (Bovine).